Here is a 132-residue protein sequence, read N- to C-terminus: Agouti-signaling protein (132 aa).

The first 22 residues, 1–22 (MDVTRLVLATLLVFLCFFAAYS), serve as a signal peptide directing secretion. Asn39 carries N-linked (GlcNAc...) asparagine glycosylation. A disordered region spans residues 60–93 (KKISRKEAEKRRSSKKEASKQKVARPRTPLSVPC). The span at 64–79 (RKEAEKRRSSKKEASK) shows a compositional bias: basic and acidic residues. Disulfide bonds link Cys93/Cys108, Cys100/Cys114, Cys107/Cys125, Cys111/Cys132, and Cys116/Cys123. The 40-residue stretch at 93 to 132 (CVSTRGSCKPPAPACCHPCASCQCRFFRSACSCRVLNVNC) folds into the Agouti domain.

Its subcellular location is the secreted. Functionally, involved in the regulation of melanogenesis. The binding of ASP to MC1R precludes alpha-MSH initiated signaling and thus blocks production of cAMP, leading to a down-regulation of eumelanogenesis (brown/black pigment) and thus increasing synthesis of pheomelanin (yellow/red pigment). The protein is Agouti-signaling protein (ASIP) of Cebuella pygmaea (Pygmy marmoset).